The following is a 147-amino-acid chain: Ribonuclease pancreatic gamma-type (147 aa).

Positions 1-25 (MGLEKSFLLFSLLVLVLGWVQPSLG) are cleaved as a signal peptide. Substrate-binding residues include Lys35 and Arg38. The active-site Proton acceptor is His40. Disulfide bonds link Cys54–Cys112, Cys68–Cys123, Cys86–Cys138, and Cys93–Cys100. Substrate is bound by residues 69–73 (KPMNT), Lys94, and Arg113. The Proton donor role is filled by His142.

The protein belongs to the pancreatic ribonuclease family. Monomer.

The protein localises to the secreted. It carries out the reaction an [RNA] containing cytidine + H2O = an [RNA]-3'-cytidine-3'-phosphate + a 5'-hydroxy-ribonucleotide-3'-[RNA].. It catalyses the reaction an [RNA] containing uridine + H2O = an [RNA]-3'-uridine-3'-phosphate + a 5'-hydroxy-ribonucleotide-3'-[RNA].. In terms of biological role, endonuclease that catalyzes the cleavage of RNA on the 3' side of pyrimidine nucleotides. Acts on single-stranded and double-stranded RNA. In Rattus rattus (Black rat), this protein is Ribonuclease pancreatic gamma-type.